The following is a 62-amino-acid chain: RRCFNQQSSQPQTNKSCPPGENSCYRKQWRDHRGTIIERGCGCPTVKPGIKLRCCQSEDCNN.

The segment covering 1–16 (RRCFNQQSSQPQTNKS) has biased composition (polar residues). The interval 1-21 (RRCFNQQSSQPQTNKSCPPGE) is disordered. 4 disulfide bridges follow: Cys3–Cys24, Cys17–Cys41, Cys43–Cys54, and Cys55–Cys60.

The protein belongs to the three-finger toxin family. Short-chain subfamily. Type I alpha-neurotoxin sub-subfamily. Expressed by the venom gland.

It is found in the secreted. Binds to muscle nicotinic acetylcholine receptor (nAChR) and inhibit acetylcholine from binding to the receptor, thereby impairing neuromuscular transmission. In Laticauda crockeri (Crocker's sea snake), this protein is Short neurotoxin C.